Reading from the N-terminus, the 447-residue chain is Tubulin beta-2 chain (447 aa).

GTP is bound by residues glutamine 11, glutamate 69, serine 138, glycine 142, threonine 143, glycine 144, asparagine 204, and asparagine 226. Glutamate 69 provides a ligand contact to Mg(2+). The interval 426–447 (QDAGVDEEEEEYEEEAPLEEEV) is disordered. The segment covering 429–447 (GVDEEEEEYEEEAPLEEEV) has biased composition (acidic residues).

Belongs to the tubulin family. Dimer of alpha and beta chains. A typical microtubule is a hollow water-filled tube with an outer diameter of 25 nm and an inner diameter of 15 nM. Alpha-beta heterodimers associate head-to-tail to form protofilaments running lengthwise along the microtubule wall with the beta-tubulin subunit facing the microtubule plus end conferring a structural polarity. Microtubules usually have 13 protofilaments but different protofilament numbers can be found in some organisms and specialized cells. Mg(2+) serves as cofactor.

It localises to the cytoplasm. The protein resides in the cytoskeleton. In terms of biological role, tubulin is the major constituent of microtubules, a cylinder consisting of laterally associated linear protofilaments composed of alpha- and beta-tubulin heterodimers. Microtubules grow by the addition of GTP-tubulin dimers to the microtubule end, where a stabilizing cap forms. Below the cap, tubulin dimers are in GDP-bound state, owing to GTPase activity of alpha-tubulin. This chain is Tubulin beta-2 chain (TUB2), found in Colletotrichum gloeosporioides (Anthracnose fungus).